A 209-amino-acid polypeptide reads, in one-letter code: Ion-translocating oxidoreductase complex subunit G (209 aa).

The helical transmembrane segment at 9-29 (ATTLALFAASTTAVTAVVNML) threads the bilayer. At threonine 175 the chain carries FMN phosphoryl threonine.

It belongs to the RnfG family. As to quaternary structure, the complex is composed of six subunits: RnfA, RnfB, RnfC, RnfD, RnfE and RnfG. It depends on FMN as a cofactor.

It localises to the cell inner membrane. Functionally, part of a membrane-bound complex that couples electron transfer with translocation of ions across the membrane. The protein is Ion-translocating oxidoreductase complex subunit G of Pectobacterium atrosepticum (strain SCRI 1043 / ATCC BAA-672) (Erwinia carotovora subsp. atroseptica).